The primary structure comprises 252 residues: Pantothenate synthetase (252 aa).

29 to 36 (MGNLHAGH) provides a ligand contact to ATP. H36 (proton donor) is an active-site residue. Q60 is a binding site for (R)-pantoate. Beta-alanine is bound at residue Q60. An ATP-binding site is contributed by 146–149 (GEKD). Q152 provides a ligand contact to (R)-pantoate. Residues V175 and 183–186 (CSSR) contribute to the ATP site.

Belongs to the pantothenate synthetase family. As to quaternary structure, homodimer.

It localises to the cytoplasm. It catalyses the reaction (R)-pantoate + beta-alanine + ATP = (R)-pantothenate + AMP + diphosphate + H(+). It participates in cofactor biosynthesis; (R)-pantothenate biosynthesis; (R)-pantothenate from (R)-pantoate and beta-alanine: step 1/1. Its function is as follows. Catalyzes the condensation of pantoate with beta-alanine in an ATP-dependent reaction via a pantoyl-adenylate intermediate. This Legionella pneumophila (strain Corby) protein is Pantothenate synthetase.